Reading from the N-terminus, the 355-residue chain is Guanine nucleotide-binding protein G(i) subunit alpha-2 (355 aa).

A lipid anchor (N-myristoyl glycine) is attached at glycine 2. Cysteine 3 carries the S-palmitoyl cysteine lipid modification. Residues arginine 32–phenylalanine 355 form the G-alpha domain. Residues lysine 35–threonine 48 are G1 motif. Residues glycine 40–serine 47, leucine 176–threonine 182, aspartate 201–glutamine 205, asparagine 270–aspartate 273, and alanine 327 each bind GTP. Mg(2+) contacts are provided by serine 47 and threonine 182. Residues aspartate 174–threonine 182 form a G2 motif region. The tract at residues phenylalanine 197–arginine 206 is G3 motif. Residues isoleucine 266 to aspartate 273 are G4 motif. Residues threonine 325–threonine 330 are G5 motif.

It belongs to the G-alpha family. G(i/o/t/z) subfamily. In terms of assembly, g proteins are composed of 3 units; alpha, beta and gamma. The alpha chain contains the guanine nucleotide binding site. In this context, interacts with GNB2. Interacts with UNC5B. Interacts with GPSM1. Interacts with RGS12 and RGS14. Interacts (inactive GDP-bound form) with NUCB1 (via GBA motif); the interaction leads to activation of GNAI3. Interacts (inactive GDP-bound form) with CCDC88C/DAPLE (via GBA motif). Interacts (inactive GDP-bound form) with CCDC8A/GIV (via GBA motif). Interacts with CXCR1 and CXCR2.

It is found in the cytoplasm. The protein localises to the cytoskeleton. It localises to the microtubule organizing center. Its subcellular location is the centrosome. The protein resides in the cell membrane. It is found in the membrane. Functionally, guanine nucleotide-binding proteins (G proteins) are involved as modulators or transducers in various transmembrane signaling systems. The G(i) proteins are involved in hormonal regulation of adenylate cyclase: they inhibit the cyclase in response to beta-adrenergic stimuli. May play a role in cell division. The protein is Guanine nucleotide-binding protein G(i) subunit alpha-2 (GNAI2) of Canis lupus familiaris (Dog).